Reading from the N-terminus, the 185-residue chain is Orotate phosphoribosyltransferase (185 aa).

5-phospho-alpha-D-ribose 1-diphosphate is bound by residues arginine 94, lysine 95, lysine 98, histidine 100, and 120 to 128 (EDVTTTGGS). 2 residues coordinate orotate: threonine 124 and arginine 152.

The protein belongs to the purine/pyrimidine phosphoribosyltransferase family. PyrE subfamily. As to quaternary structure, homodimer. It depends on Mg(2+) as a cofactor.

It carries out the reaction orotidine 5'-phosphate + diphosphate = orotate + 5-phospho-alpha-D-ribose 1-diphosphate. It participates in pyrimidine metabolism; UMP biosynthesis via de novo pathway; UMP from orotate: step 1/2. Functionally, catalyzes the transfer of a ribosyl phosphate group from 5-phosphoribose 1-diphosphate to orotate, leading to the formation of orotidine monophosphate (OMP). The chain is Orotate phosphoribosyltransferase from Thermococcus kodakarensis (strain ATCC BAA-918 / JCM 12380 / KOD1) (Pyrococcus kodakaraensis (strain KOD1)).